Reading from the N-terminus, the 414-residue chain is Mu-like prophage FluMu F protein (414 aa).

This sequence to phage Mu protein F.

Functionally, involved in virion morphogenesis. This Haemophilus influenzae (strain ATCC 51907 / DSM 11121 / KW20 / Rd) protein is Mu-like prophage FluMu F protein.